A 249-amino-acid polypeptide reads, in one-letter code: 5'-nucleotidase SurE (249 aa).

A divalent metal cation is bound by residues D9, D10, S40, and N92.

The protein belongs to the SurE nucleotidase family. A divalent metal cation is required as a cofactor.

Its subcellular location is the cytoplasm. It carries out the reaction a ribonucleoside 5'-phosphate + H2O = a ribonucleoside + phosphate. Its function is as follows. Nucleotidase that shows phosphatase activity on nucleoside 5'-monophosphates. In Shewanella putrefaciens (strain CN-32 / ATCC BAA-453), this protein is 5'-nucleotidase SurE.